The primary structure comprises 569 residues: Urease subunit alpha (569 aa).

One can recognise a Urease domain in the interval 131 to 569 (GSIDTHIHFI…VPMAQKYFLL (439 aa)). Ni(2+)-binding residues include His136, His138, and Lys219. Lys219 is subject to N6-carboxylysine. His221 provides a ligand contact to substrate. His248 and His274 together coordinate Ni(2+). His322 acts as the Proton donor in catalysis. Asp362 is a Ni(2+) binding site.

This sequence belongs to the metallo-dependent hydrolases superfamily. Urease alpha subunit family. As to quaternary structure, heterotrimer of UreA (gamma), UreB (beta) and UreC (alpha) subunits. Two heterotrimers associate to form the active enzyme. In most bacteria it is thought that three heterotrimers form the active enzyme. Ni cation serves as cofactor. Post-translationally, carboxylation allows a single lysine to coordinate two nickel ions.

The protein localises to the cytoplasm. It catalyses the reaction urea + 2 H2O + H(+) = hydrogencarbonate + 2 NH4(+). Its pathway is nitrogen metabolism; urea degradation; CO(2) and NH(3) from urea (urease route): step 1/1. Its activity is regulated as follows. Inhibited by HgCl2 and acetohydroxyamic acid slightly by EDTA, but not by boric acid or L-methionine-DL-sulfoximine. The polypeptide is Urease subunit alpha (Prochlorococcus marinus subsp. pastoris (strain PCC 9511)).